A 196-amino-acid chain; its full sequence is NAD(P)H-quinone oxidoreductase subunit I (196 aa).

4Fe-4S ferredoxin-type domains follow at residues 54–83 (GRIH…VDWV) and 94–123 (KHYS…VTEE). Cys-63, Cys-66, Cys-69, Cys-73, Cys-103, Cys-106, Cys-109, and Cys-113 together coordinate [4Fe-4S] cluster. The tract at residues 174 to 196 (PAGAQRAGERPEAIANTAKSSEN) is disordered.

This sequence belongs to the complex I 23 kDa subunit family. As to quaternary structure, NDH-1 is composed of at least 11 different subunits. It depends on [4Fe-4S] cluster as a cofactor.

The protein resides in the cellular thylakoid membrane. The catalysed reaction is a plastoquinone + NADH + (n+1) H(+)(in) = a plastoquinol + NAD(+) + n H(+)(out). The enzyme catalyses a plastoquinone + NADPH + (n+1) H(+)(in) = a plastoquinol + NADP(+) + n H(+)(out). Functionally, NDH-1 shuttles electrons from an unknown electron donor, via FMN and iron-sulfur (Fe-S) centers, to quinones in the respiratory and/or the photosynthetic chain. The immediate electron acceptor for the enzyme in this species is believed to be plastoquinone. Couples the redox reaction to proton translocation, and thus conserves the redox energy in a proton gradient. This Thermosynechococcus vestitus (strain NIES-2133 / IAM M-273 / BP-1) protein is NAD(P)H-quinone oxidoreductase subunit I.